Here is a 236-residue protein sequence, read N- to C-terminus: 15,16-dihydrobiliverdin:ferredoxin oxidoreductase (236 aa).

It belongs to the HY2 family.

The enzyme catalyses 15,16-dihydrobiliverdin + oxidized 2[4Fe-4S]-[ferredoxin] = biliverdin IXalpha + reduced 2[4Fe-4S]-[ferredoxin] + 2 H(+). Catalyzes the two-electron reduction of biliverdin IX-alpha at the C15 methine bridge. The sequence is that of 15,16-dihydrobiliverdin:ferredoxin oxidoreductase from Prochlorococcus marinus (strain MIT 9215).